We begin with the raw amino-acid sequence, 161 residues long: Putative 4-hydroxy-4-methyl-2-oxoglutarate aldolase (161 aa).

Substrate contacts are provided by residues 75–78 (GDQL) and R97. D98 contacts a divalent metal cation.

Belongs to the class II aldolase/RraA-like family. In terms of assembly, homotrimer. A divalent metal cation serves as cofactor.

It carries out the reaction 4-hydroxy-4-methyl-2-oxoglutarate = 2 pyruvate. The enzyme catalyses oxaloacetate + H(+) = pyruvate + CO2. In terms of biological role, catalyzes the aldol cleavage of 4-hydroxy-4-methyl-2-oxoglutarate (HMG) into 2 molecules of pyruvate. Also contains a secondary oxaloacetate (OAA) decarboxylase activity due to the common pyruvate enolate transition state formed following C-C bond cleavage in the retro-aldol and decarboxylation reactions. This chain is Putative 4-hydroxy-4-methyl-2-oxoglutarate aldolase, found in Vibrio cholerae serotype O1 (strain ATCC 39315 / El Tor Inaba N16961).